The following is a 948-amino-acid chain: Zinc finger CCCH domain-containing protein 3 (948 aa).

Disordered regions lie at residues 25–108, 121–219, 265–296, and 336–493; these read HGNA…VPQQ, QNVV…RRTV, VDAG…REAS, and NVCK…LKKT. Residues 56–74 show a composition bias toward basic residues; it reads RPSRRGYSSHHGPSWRKKY. Over residues 128–141 the composition is skewed to low complexity; it reads KPPSKSGSASASGA. The span at 157-166 shows a compositional bias: basic and acidic residues; that stretch reads QRPREGEGEP. Positions 372–398 are enriched in low complexity; the sequence is SAPSKYKWKASSPSASSSSSFRWQSEA. Residues 405–415 are compositionally biased toward polar residues; sequence SQLSPVLSRSP. Ser408 is subject to Phosphoserine. The span at 441–452 shows a compositional bias: basic residues; it reads VKSRTKIIRRRS. C3H1-type zinc fingers lie at residues 667–695, 699–722, 723–749, 750–777, and 778–800; these read EKRK…HDPE, VCTR…HHVS, KEKM…HVYV, SRKA…HTLL, and CPDF…HRTQ. 2 disordered regions span residues 798-891 and 913-948; these read RTQK…HEAP and ISLQ…KPRL. The segment covering 834–846 has biased composition (polar residues); sequence SASQRPTRQTPSS. Composition is skewed to low complexity over residues 847-856 and 864-885; these read AALTAAAVAA and SASP…PPAS. Ser918 and Ser920 each carry phosphoserine.

As to quaternary structure, interacts with SMAD1, SMAD3, SMAD4, CPSF2 and CPSF3.

The protein resides in the nucleus. Functionally, required for the export of polyadenylated mRNAs from the nucleus. Enhances ACVR1B-induced SMAD-dependent transcription. Binds to single-stranded DNA but not to double-stranded DNA in vitro. Involved in RNA cleavage. The protein is Zinc finger CCCH domain-containing protein 3 (ZC3H3) of Homo sapiens (Human).